The following is a 735-amino-acid chain: Translation initiation factor IF-2 (735 aa).

Basic and acidic residues-rich tracts occupy residues 52-66 (VNSE…EKPK) and 101-117 (KGKE…EKKL). Residues 52–154 (VNSEKKAEKK…PAKKEKELPK (103 aa)) form a disordered region. The segment covering 121–133 (AKKKGKGPMKGKK) has biased composition (basic residues). Residues 134 to 145 (QAAPASKQAQQP) show a composition bias toward low complexity. One can recognise a tr-type G domain in the interval 236-405 (ERPPVVTIMG…LLVSEMEELK (170 aa)). The segment at 245–252 (GHVDHGKT) is G1. Residue 245–252 (GHVDHGKT) participates in GTP binding. Residues 270-274 (GITQH) form a G2 region. The tract at residues 291–294 (DTPG) is G3. Residues 291–295 (DTPGH) and 345–348 (NKMD) contribute to the GTP site. Positions 345 to 348 (NKMD) are G4. A G5 region spans residues 381 to 383 (SAK).

Belongs to the TRAFAC class translation factor GTPase superfamily. Classic translation factor GTPase family. IF-2 subfamily.

The protein resides in the cytoplasm. Its function is as follows. One of the essential components for the initiation of protein synthesis. Protects formylmethionyl-tRNA from spontaneous hydrolysis and promotes its binding to the 30S ribosomal subunits. Also involved in the hydrolysis of GTP during the formation of the 70S ribosomal complex. The chain is Translation initiation factor IF-2 from Geobacillus thermodenitrificans (strain NG80-2).